We begin with the raw amino-acid sequence, 847 residues long: Follistatin-related protein 5 (847 aa).

A signal peptide spans Met1–Gly20. In terms of domain architecture, Kazal-like spans Glu81–Phe135. 3 cysteine pairs are disulfide-bonded: Cys87–Cys119, Cys93–Cys112, and Cys101–Cys133. EF-hand domains follow at residues Arg175–Asn210 and Lys211–Gln246. Ca(2+) is bound by residues Asp188, Asp190, Asn192, Glu199, Asp226, Asn228, Asp230, His232, and Glu237. 2 Ig-like domains span residues Pro250 to Asn338 and Pro341 to Ser426. Disulfide bonds link Cys270-Cys321 and Cys362-Cys413. 2 N-linked (GlcNAc...) asparagine glycosylation sites follow: Asn318 and Asn394.

It localises to the secreted. The chain is Follistatin-related protein 5 (Fstl5) from Mus musculus (Mouse).